Here is a 640-residue protein sequence, read N- to C-terminus: 1-deoxy-D-xylulose-5-phosphate synthase (640 aa).

Residues His72 and 113 to 115 contribute to the thiamine diphosphate site; that span reads GHA. Asp144 serves as a coordination point for Mg(2+). Residues 145 to 146, Asn174, Tyr287, and Glu370 each bind thiamine diphosphate; that span reads GA. Asn174 contributes to the Mg(2+) binding site.

Belongs to the transketolase family. DXPS subfamily. As to quaternary structure, homodimer. Mg(2+) is required as a cofactor. The cofactor is thiamine diphosphate.

The catalysed reaction is D-glyceraldehyde 3-phosphate + pyruvate + H(+) = 1-deoxy-D-xylulose 5-phosphate + CO2. The protein operates within metabolic intermediate biosynthesis; 1-deoxy-D-xylulose 5-phosphate biosynthesis; 1-deoxy-D-xylulose 5-phosphate from D-glyceraldehyde 3-phosphate and pyruvate: step 1/1. Catalyzes the acyloin condensation reaction between C atoms 2 and 3 of pyruvate and glyceraldehyde 3-phosphate to yield 1-deoxy-D-xylulose-5-phosphate (DXP). The protein is 1-deoxy-D-xylulose-5-phosphate synthase of Synechococcus sp. (strain RCC307).